The sequence spans 454 residues: Phenylalanine--tRNA ligase, mitochondrial (454 aa).

Substrate is bound by residues 141 to 144 (SAHQ), arginine 163, 170 to 172 (VHY), 177 to 179 (QME), glutamate 266, and phenylalanine 291. A disordered region spans residues 327–347 (KSISTSSSSSSSSSSSSSSTL). Low complexity predominate over residues 328–347 (SISTSSSSSSSSSSSSSSTL). The FDX-ACB domain occupies 361-454 (SKYPSCFKDV…LENHLSVKLR (94 aa)).

Belongs to the class-II aminoacyl-tRNA synthetase family. In terms of assembly, monomer.

Its subcellular location is the mitochondrion matrix. It catalyses the reaction tRNA(Phe) + L-phenylalanine + ATP = L-phenylalanyl-tRNA(Phe) + AMP + diphosphate + H(+). Functionally, is responsible for the charging of tRNA(Phe) with phenylalanine in mitochondrial translation. In Dictyostelium discoideum (Social amoeba), this protein is Phenylalanine--tRNA ligase, mitochondrial (mpheS).